A 313-amino-acid chain; its full sequence is Porphobilinogen deaminase (313 aa).

At cysteine 242 the chain carries S-(dipyrrolylmethanemethyl)cysteine.

The protein belongs to the HMBS family. As to quaternary structure, monomer. The cofactor is dipyrromethane.

It carries out the reaction 4 porphobilinogen + H2O = hydroxymethylbilane + 4 NH4(+). Its pathway is porphyrin-containing compound metabolism; protoporphyrin-IX biosynthesis; coproporphyrinogen-III from 5-aminolevulinate: step 2/4. Tetrapolymerization of the monopyrrole PBG into the hydroxymethylbilane pre-uroporphyrinogen in several discrete steps. The protein is Porphobilinogen deaminase of Pseudomonas putida (strain W619).